Reading from the N-terminus, the 927-residue chain is Heat shock protein hsp98 (927 aa).

A Clp R domain is found at 2–162 (TSKMEFTDRA…TDAIQAIRGT (161 aa)). Repeat regions lie at residues 7–87 (FTDR…LVRL) and 99–162 (MAPS…IRGT). Residues 179 to 428 (LAKFTIDMTA…AVRVARESQP (250 aa)) are NBD1. 224–231 (GEPGVGKT) serves as a coordination point for ATP. Residues 429-553 (EIIDSLERKL…AALNAAAAET (125 aa)) are a coiled coil. The disordered stretch occupies residues 454 to 473 (EASKARLEQAKKDAENVEEE). An NBD2 region spans residues 562–752 (VGPDQINEIV…IVVMTSNLGA (191 aa)). Position 635-642 (635-642 (GPSGTGKT)) interacts with ATP. The tract at residues 908 to 927 (EDAVDEVAPESEMDEDLYDD) is disordered.

It belongs to the ClpA/ClpB family. Homohexamer, forming a ring with a central pore.

The protein localises to the cytoplasm. It localises to the nucleus. Required, in concert with Hsp40 and Hsp70 and small Hsps, for the dissociation, resolubilization and refolding of aggregates of damaged proteins after heat or other environmental stresses. Extracts proteins from aggregates by unfolding and threading them in an ATP-dependent process through the axial channel of the protein hexamer, after which they can be refolded by components of the Hsp70/Hsp40 chaperone system. This Neurospora crassa (strain ATCC 24698 / 74-OR23-1A / CBS 708.71 / DSM 1257 / FGSC 987) protein is Heat shock protein hsp98 (hsp98).